We begin with the raw amino-acid sequence, 496 residues long: Thiamine transporter 2 (496 aa).

Residues M1–S7 lie on the Cytoplasmic side of the membrane. Residues L8 to M28 form a helical membrane-spanning segment. The Extracellular segment spans residues R29–N53. N45 carries an N-linked (GlcNAc...) asparagine glycan. Residues E54–T74 form a helical membrane-spanning segment. At D75–P81 the chain is on the cytoplasmic side. A helical membrane pass occupies residues V82–G102. Residues V103–E110 are Extracellular-facing. A helical membrane pass occupies residues F111–V131. Residues S132–R144 are Cytoplasmic-facing. The chain crosses the membrane as a helical span at residues S145–A165. The N-linked (GlcNAc...) asparagine glycan is linked to N166. At N166 to Y169 the chain is on the extracellular side. Residues F170 to L190 traverse the membrane as a helical segment. The Cytoplasmic portion of the chain corresponds to P191–S282. Residues L283–W303 traverse the membrane as a helical segment. The Extracellular segment spans residues D304–N316. A helical transmembrane segment spans residues G317–V337. Residues K338–D342 lie on the Cytoplasmic side of the membrane. The chain crosses the membrane as a helical span at residues L343–M363. Topologically, residues H364–G375 are extracellular. A helical transmembrane segment spans residues Y376–V396. The Cytoplasmic portion of the chain corresponds to N397 to L405. A helical transmembrane segment spans residues V406–V426. Residues D427–P434 are Extracellular-facing. Residues V435–M455 form a helical membrane-spanning segment. The Cytoplasmic portion of the chain corresponds to R456–L496. A disordered region spans residues K468–L496.

It belongs to the reduced folate carrier (RFC) transporter (TC 2.A.48) family. As to expression, widely expressed but most abundant in placenta, kidney and liver.

Its subcellular location is the membrane. The catalysed reaction is thiamine(out) + H(+)(in) = thiamine(in) + H(+)(out). It catalyses the reaction pyridoxine(out) + n H(+)(out) = pyridoxine(in) + n H(+)(in). Pyridoxine transport is inhibited by carbonyl cyanide p-trifluoromethoxyphenylhydrazone (FCCP) and carbonyl cyanide m-chlorophenylhydrazone (CCCP). In terms of biological role, mediates high affinity thiamine uptake, probably via a proton anti-port mechanism. Has no folate transport activity. Mediates H(+)-dependent pyridoxine transport. The sequence is that of Thiamine transporter 2 (SLC19A3) from Homo sapiens (Human).